The following is a 77-amino-acid chain: Acyl carrier protein (77 aa).

Residues Ser2–Gln77 form the Carrier domain. O-(pantetheine 4'-phosphoryl)serine is present on Ser37.

Belongs to the acyl carrier protein (ACP) family. Post-translationally, 4'-phosphopantetheine is transferred from CoA to a specific serine of apo-ACP by AcpS. This modification is essential for activity because fatty acids are bound in thioester linkage to the sulfhydryl of the prosthetic group.

The protein localises to the cytoplasm. It functions in the pathway lipid metabolism; fatty acid biosynthesis. Its function is as follows. Carrier of the growing fatty acid chain in fatty acid biosynthesis. The sequence is that of Acyl carrier protein from Shewanella denitrificans (strain OS217 / ATCC BAA-1090 / DSM 15013).